A 232-amino-acid chain; its full sequence is Ribonuclease 3 (232 aa).

Residues 2-135 (IKALEDDLSQ…FIGALYLDQG (134 aa)) form the RNase III domain. E48 provides a ligand contact to Mg(2+). D52 is an active-site residue. Residues D121 and E124 each contribute to the Mg(2+) site. Residue E124 is part of the active site. One can recognise a DRBM domain in the interval 161-230 (DHKSELQELL…ANQALQLLRR (70 aa)).

The protein belongs to the ribonuclease III family. As to quaternary structure, homodimer. Requires Mg(2+) as cofactor.

It is found in the cytoplasm. It catalyses the reaction Endonucleolytic cleavage to 5'-phosphomonoester.. In terms of biological role, digests double-stranded RNA. Involved in the processing of primary rRNA transcript to yield the immediate precursors to the large and small rRNAs (23S and 16S). Processes some mRNAs, and tRNAs when they are encoded in the rRNA operon. Processes pre-crRNA and tracrRNA of type II CRISPR loci if present in the organism. The sequence is that of Ribonuclease 3 from Pediococcus pentosaceus (strain ATCC 25745 / CCUG 21536 / LMG 10740 / 183-1w).